Reading from the N-terminus, the 689-residue chain is Pyocin-S2 (689 aa).

Zn(2+) is bound by residues histidine 656, histidine 681, and histidine 685.

It belongs to the colicin/pyosin nuclease family. Purified pyocin S2 makes up a complex of the two (large and small) proteins. The large protein, but not the pyocin complex, shows in vitro DNase activity.

Its function is as follows. Causes breakdown of chromosomal DNA as well as complete inhibition of lipid synthesis in sensitive cells. This chain is Pyocin-S2 (pys2), found in Pseudomonas aeruginosa (strain ATCC 15692 / DSM 22644 / CIP 104116 / JCM 14847 / LMG 12228 / 1C / PRS 101 / PAO1).